Reading from the N-terminus, the 449-residue chain is Naphthalene 1,2-dioxygenase system, large oxygenase component (449 aa).

The Rieske domain occupies 39–137; sequence WLFLTHDSLI…LNKKCLGLKE (99 aa). [2Fe-2S] cluster is bound by residues C81, H83, C101, and H104. Fe cation contacts are provided by H208, H213, and D362.

Belongs to the bacterial ring-hydroxylating dioxygenase alpha subunit family. The naphthalene dioxygenase (NDO) multicomponent enzyme system is composed of an electron transfer component and a dioxygenase component (iron sulfur protein (ISP)). The electron transfer component is composed of a ferredoxin reductase (NdoR) and a ferredoxin (NdoA), and the dioxygenase component is formed of a heterohexamer (trimer of heterodimers) of three large alpha subunits (NdoB) and three small beta subunits (NdoC). [2Fe-2S] cluster serves as cofactor. Requires Fe(2+) as cofactor.

The catalysed reaction is naphthalene + NADH + O2 + H(+) = (1R,2S)-1,2-dihydronaphthalene-1,2-diol + NAD(+). Its pathway is aromatic compound metabolism; naphthalene degradation. Functionally, component of the naphthalene dioxygenase (NDO) multicomponent enzyme system which catalyzes the incorporation of both atoms of molecular oxygen into naphthalene to form cis-(1R,2S)-dihydroxy-1,2-dihydronaphthalene. The alpha subunit has a catalytic role in the holoenzyme. Also able to catalyze the cis-dihydroxylation of biphenyl and phenanthrene. The chain is Naphthalene 1,2-dioxygenase system, large oxygenase component from Pseudomonas putida (Arthrobacter siderocapsulatus).